We begin with the raw amino-acid sequence, 282 residues long: 3-methyl-2-oxobutanoate hydroxymethyltransferase (282 aa).

Mg(2+) is bound by residues aspartate 46 and aspartate 85. 3-methyl-2-oxobutanoate contacts are provided by residues 46–47 (DS), aspartate 85, and lysine 115. Position 117 (glutamate 117) interacts with Mg(2+). The active-site Proton acceptor is the glutamate 184.

Belongs to the PanB family. In terms of assembly, homodecamer; pentamer of dimers. It depends on Mg(2+) as a cofactor.

It localises to the cytoplasm. The catalysed reaction is 3-methyl-2-oxobutanoate + (6R)-5,10-methylene-5,6,7,8-tetrahydrofolate + H2O = 2-dehydropantoate + (6S)-5,6,7,8-tetrahydrofolate. The protein operates within cofactor biosynthesis; (R)-pantothenate biosynthesis; (R)-pantoate from 3-methyl-2-oxobutanoate: step 1/2. Catalyzes the reversible reaction in which hydroxymethyl group from 5,10-methylenetetrahydrofolate is transferred onto alpha-ketoisovalerate to form ketopantoate. This is 3-methyl-2-oxobutanoate hydroxymethyltransferase from Alkaliphilus metalliredigens (strain QYMF).